The primary structure comprises 248 residues: 7-cyano-7-deazaguanine synthase (248 aa).

22–32 (LSGGLDSTTCL) is a binding site for ATP. Residues C216, C225, C228, and C231 each contribute to the Zn(2+) site.

Belongs to the QueC family. It depends on Zn(2+) as a cofactor.

The catalysed reaction is 7-carboxy-7-deazaguanine + NH4(+) + ATP = 7-cyano-7-deazaguanine + ADP + phosphate + H2O + H(+). The protein operates within purine metabolism; 7-cyano-7-deazaguanine biosynthesis. Catalyzes the ATP-dependent conversion of 7-carboxy-7-deazaguanine (CDG) to 7-cyano-7-deazaguanine (preQ(0)). In Leptospira biflexa serovar Patoc (strain Patoc 1 / Ames), this protein is 7-cyano-7-deazaguanine synthase.